A 567-amino-acid chain; its full sequence is NAC domain-containing protein 78 (567 aa).

The 151-residue stretch at 9–159 (LAPGFRFHPT…AYVLCRIFQK (151 aa)) folds into the NAC domain. Residues 108–165 (VGMKKTLVYHKGRAPRGERTNWVMHEYRLSDEDLKKAGVPQEAYVLCRIFQKSGTGPK) mediate DNA binding. Residues 393-436 (NQEALDQKPAPKELEKEVAGGKEAVEEKESGEGSSSKQDTDFKD) are disordered. The span at 397-423 (LDQKPAPKELEKEVAGGKEAVEEKESG) shows a compositional bias: basic and acidic residues. Residues 544–564 (LVFMCLWVLLLSVSFKIVTMV) form a helical membrane-spanning segment.

As to expression, expressed in root meristem. Expressed in roots, rosette leaves, cauline leaves, shoot apex, stems and flowers.

The protein resides in the membrane. The protein localises to the nucleus. Its function is as follows. Transcriptional activator activated by proteolytic cleavage through regulated intramembrane proteolysis (RIP). Transcripition activator associated with the induction of genes related to flavonoid biosynthesis and required for the accumulation of anthocyanins in response to high light stress. Plays a role in the regulation of 20S and 26S proteasomes in response to high light stress. This chain is NAC domain-containing protein 78 (NAC078), found in Arabidopsis thaliana (Mouse-ear cress).